The chain runs to 73 residues: Putative antitoxin VapB16 (73 aa).

The protein belongs to the UPF0330 family.

Functionally, possibly the antitoxin component of a type II toxin-antitoxin (TA) system. Its cognate toxin is VapC16 (Potential). This Archaeoglobus fulgidus (strain ATCC 49558 / DSM 4304 / JCM 9628 / NBRC 100126 / VC-16) protein is Putative antitoxin VapB16 (vapB16).